We begin with the raw amino-acid sequence, 26 residues long: Maculatin-3.1 (26 aa).

Position 26 is an alanine amide (A26).

As to expression, expressed by the skin dorsal glands.

Its subcellular location is the secreted. Shows antibacterial activity against S.uberis. This is Maculatin-3.1 from Ranoidea genimaculata (Brown-spotted tree frog).